We begin with the raw amino-acid sequence, 491 residues long: Glutamate--tRNA ligase (491 aa).

The short motif at Pro14–Leu24 is the 'HIGH' region element. 4 residues coordinate Zn(2+): Cys111, Cys113, Cys136, and Asp138. The 'KMSKS' region motif lies at Lys257–Arg261. Lys260 serves as a coordination point for ATP.

The protein belongs to the class-I aminoacyl-tRNA synthetase family. Glutamate--tRNA ligase type 1 subfamily. Monomer. Zn(2+) serves as cofactor.

It localises to the cytoplasm. The enzyme catalyses tRNA(Glu) + L-glutamate + ATP = L-glutamyl-tRNA(Glu) + AMP + diphosphate. Catalyzes the attachment of glutamate to tRNA(Glu) in a two-step reaction: glutamate is first activated by ATP to form Glu-AMP and then transferred to the acceptor end of tRNA(Glu). The sequence is that of Glutamate--tRNA ligase from Nocardioides sp. (strain ATCC BAA-499 / JS614).